We begin with the raw amino-acid sequence, 123 residues long: MPTIQQLVRKGRKDKKAKVKTAALKGSPQRRGVCTRVYTTTPKKPNSALRKVARVRLTSGIEVSAYIPGEGHNLQEHSMVLVRGGRVKDLPGVRYRIIRGSLDTQGVKDRKQARSRYGAKKEK.

The segment at 1 to 32 (MPTIQQLVRKGRKDKKAKVKTAALKGSPQRRG) is disordered. A compositionally biased stretch (basic residues) spans 9–19 (RKGRKDKKAKV). 3-methylthioaspartic acid is present on Asp89.

It belongs to the universal ribosomal protein uS12 family. As to quaternary structure, part of the 30S ribosomal subunit. Contacts proteins S8 and S17. May interact with IF1 in the 30S initiation complex.

With S4 and S5 plays an important role in translational accuracy. In terms of biological role, interacts with and stabilizes bases of the 16S rRNA that are involved in tRNA selection in the A site and with the mRNA backbone. Located at the interface of the 30S and 50S subunits, it traverses the body of the 30S subunit contacting proteins on the other side and probably holding the rRNA structure together. The combined cluster of proteins S8, S12 and S17 appears to hold together the shoulder and platform of the 30S subunit. This chain is Small ribosomal subunit protein uS12, found in Corynebacterium kroppenstedtii (strain DSM 44385 / JCM 11950 / CIP 105744 / CCUG 35717).